The primary structure comprises 550 residues: Probable methionine--tRNA ligase, cytoplasmic (550 aa).

Residues 10–20 (PYVNNQPHLGN) carry the 'HIGH' region motif. The short motif at 328–332 (KFSKS) is the 'KMSKS' region element. Residue K331 participates in ATP binding.

Belongs to the class-I aminoacyl-tRNA synthetase family.

The protein resides in the cytoplasm. The enzyme catalyses tRNA(Met) + L-methionine + ATP = L-methionyl-tRNA(Met) + AMP + diphosphate. In Encephalitozoon cuniculi (strain GB-M1) (Microsporidian parasite), this protein is Probable methionine--tRNA ligase, cytoplasmic.